A 627-amino-acid polypeptide reads, in one-letter code: UvrABC system protein C (627 aa).

One can recognise a GIY-YIG domain in the interval 26–105 (PEPGVYFMRD…IKQHQPYFNV (80 aa)). Residues 215 to 250 (QELIDILSEQMEKAAEALNFEVAARIRDQIAGLKSL) enclose the UVR domain.

It belongs to the UvrC family. In terms of assembly, interacts with UvrB in an incision complex.

It localises to the cytoplasm. In terms of biological role, the UvrABC repair system catalyzes the recognition and processing of DNA lesions. UvrC both incises the 5' and 3' sides of the lesion. The N-terminal half is responsible for the 3' incision and the C-terminal half is responsible for the 5' incision. In Trichormus variabilis (strain ATCC 29413 / PCC 7937) (Anabaena variabilis), this protein is UvrABC system protein C.